We begin with the raw amino-acid sequence, 136 residues long: Protein NrdI (136 aa).

This sequence belongs to the NrdI family.

Probably involved in ribonucleotide reductase function. In Salmonella arizonae (strain ATCC BAA-731 / CDC346-86 / RSK2980), this protein is Protein NrdI.